Reading from the N-terminus, the 310-residue chain is HPr kinase/phosphorylase (310 aa).

Catalysis depends on residues His138 and Lys159. 153–160 contributes to the ATP binding site; sequence GGSGVGKS. Mg(2+) is bound at residue Ser160. Residue Asp177 is the Proton acceptor; for phosphorylation activity. Proton donor; for dephosphorylation activity of the active site. The segment at 201 to 210 is important for the catalytic mechanism of both phosphorylation and dephosphorylation; that stretch reads LEIRGLGIIN. Residue Glu202 participates in Mg(2+) binding. Residue Arg243 is part of the active site. The tract at residues 264 to 269 is important for the catalytic mechanism of dephosphorylation; the sequence is PVRPGR.

It belongs to the HPrK/P family. In terms of assembly, homohexamer. Mg(2+) serves as cofactor.

It carries out the reaction [HPr protein]-L-serine + ATP = [HPr protein]-O-phospho-L-serine + ADP + H(+). The catalysed reaction is [HPr protein]-O-phospho-L-serine + phosphate + H(+) = [HPr protein]-L-serine + diphosphate. Catalyzes the ATP- as well as the pyrophosphate-dependent phosphorylation of a specific serine residue in HPr, a phosphocarrier protein of the phosphoenolpyruvate-dependent sugar phosphotransferase system (PTS). HprK/P also catalyzes the pyrophosphate-producing, inorganic phosphate-dependent dephosphorylation (phosphorolysis) of seryl-phosphorylated HPr (P-Ser-HPr). The two antagonistic activities of HprK/P are regulated by several intracellular metabolites, which change their concentration in response to the absence or presence of rapidly metabolisable carbon sources (glucose, fructose, etc.) in the growth medium. Also phosphorylates/dephosphorylates the HPr-like catabolite repression protein crh on a specific serine residue. Therefore, by controlling the phosphorylation state of HPr and crh, HPrK/P is a sensor enzyme that plays a major role in the regulation of carbon metabolism and sugar transport: it mediates carbon catabolite repression (CCR), and regulates PTS-catalyzed carbohydrate uptake and inducer exclusion. The chain is HPr kinase/phosphorylase from Shouchella clausii (strain KSM-K16) (Alkalihalobacillus clausii).